Reading from the N-terminus, the 437-residue chain is Aspartokinase (437 aa).

Belongs to the aspartokinase family.

It carries out the reaction L-aspartate + ATP = 4-phospho-L-aspartate + ADP. Its pathway is amino-acid biosynthesis; L-lysine biosynthesis via DAP pathway; (S)-tetrahydrodipicolinate from L-aspartate: step 1/4. The protein operates within amino-acid biosynthesis; L-methionine biosynthesis via de novo pathway; L-homoserine from L-aspartate: step 1/3. It participates in amino-acid biosynthesis; L-threonine biosynthesis; L-threonine from L-aspartate: step 1/5. The polypeptide is Aspartokinase (lysC) (Chlamydia muridarum (strain MoPn / Nigg)).